The following is a 427-amino-acid chain: L-rhamnose isomerase (427 aa).

Mn(2+) is bound by residues His-264, Asp-296, and Asp-298.

This sequence belongs to the rhamnose isomerase family. The cofactor is Mn(2+).

The protein resides in the cytoplasm. The enzyme catalyses L-rhamnopyranose = L-rhamnulose. Its pathway is carbohydrate degradation; L-rhamnose degradation; glycerone phosphate from L-rhamnose: step 1/3. Functionally, catalyzes the interconversion of L-rhamnose and L-rhamnulose. The polypeptide is L-rhamnose isomerase (Rhodopirellula baltica (strain DSM 10527 / NCIMB 13988 / SH1)).